Consider the following 137-residue polypeptide: uncharacterized protein (137 aa).

3 helical membrane passes run Glu-5–Ile-25, Ile-79–Tyr-99, and Phe-109–Trp-129.

Belongs to the MAPEG family.

It is found in the cell membrane. This is an uncharacterized protein from Synechocystis sp. (strain ATCC 27184 / PCC 6803 / Kazusa).